The sequence spans 1580 residues: Collagen alpha-1(XVI) chain (1580 aa).

An N-terminal signal peptide occupies residues 1 to 21; sequence MLTSWAPGLWVLGLWATFSHG. N-linked (GlcNAc...) asparagine glycosylation occurs at asparagine 47. The Laminin G-like domain occupies 50-231; sequence GFNLIRRLNL…LQQAHIYCDP (182 aa). The tract at residues 232–374 is nonhelical region 10 (NC10); that stretch reads ELVLEEGCCE…SPDAPLQCVE (143 aa). Residues 324 to 547 form a disordered region; it reads RESNVTLGPS…DPAPAWEGLG (224 aa). The N-linked (GlcNAc...) asparagine glycan is linked to asparagine 327. Residues 375-424 enclose the Collagen-like 1 domain; it reads GPKGEKGESGDLGPPGLPGPTGQKGQKGEKGDGGLKGLPGKPGRDGRPGE. A triple-helical region 9 (COL9) with 3 imperfections region spans residues 375–509; sequence GPKGEKGESG…PGTKGEKGDP (135 aa). A compositionally biased stretch (pro residues) spans 449–460; sequence PGPPGLPGPPGI. Over residues 486 to 495 the composition is skewed to gly residues; sequence GKEGPGGKPG. The interval 510–524 is nonhelical region 9 (NC9); that stretch reads CEVCPTLPEGSQNFV. A triple-helical region 8 (COL8) with 1 imperfection region spans residues 525-570; sequence GLPGKPGPKGEPGDPAPAWEGLGTVGLKGDRGDPGIQGMKGEKGEP. Positions 555–557 match the Cell attachment site motif; sequence RGD. The segment at 571–586 is nonhelical region 8 (NC8); that stretch reads CSSCSSGVGAQHLGPS. Low complexity predominate over residues 585–598; sequence PSPGHGLPGLPGTS. Positions 585 to 935 are disordered; the sequence is PSPGHGLPGL…LPGQPGLTAE (351 aa). The tract at residues 587–640 is triple-helical region 7 (COL7) with 1 imperfection; sequence PGHGLPGLPGTSGIPGPRGLKGEKGSFGDTGPAGVPGSPGPVGPAGIKGAKGEP. Collagen-like domains follow at residues 590–643 and 676–725; these read GLPG…PCEP and GLPG…PAGP. A nonhelical region 7 (NC7) region spans residues 641–661; the sequence is CEPCTALSELQDGDMRVVHLP. The triple-helical region 6 (COL6) with 1 imperfection stretch occupies residues 662 to 732; sequence GPAGEKGEPG…AGPKGEKGDG (71 aa). The span at 683 to 693 shows a compositional bias: basic and acidic residues; that stretch reads KAGERGLKGQK. The span at 698-714 shows a compositional bias: low complexity; it reads NPGDPGTPGITGQPGIS. A nonhelical region 6 (NC6) region spans residues 733-747; sequence CTACPSLQGALTDVS. A triple-helical region 5 (COL5) with 3 imperfections region spans residues 748-870; sequence GLPGKPGPKG…RGEKGEPGEC (123 aa). The Collagen-like 4 domain occupies 797–848; it reads GAEGPQGEPGTQGLPGTQGLPGPRGPPGSAGEKGAQGSPGPKGAIGPMGPPG. The span at 801-817 shows a compositional bias: low complexity; sequence PQGEPGTQGLPGTQGLP. The tract at residues 871–881 is nonhelical region 5 (NC5); sequence SCPSRGEPIFS. Residues 882–933 are triple-helical region 4 (COL4) with 2 imperfections; that stretch reads GMPGAPGLWMGSSSQPGPQGPPGVPGPPGPPGMPGLQGVPGHNGLPGQPGLT. The segment covering 899–914 has biased composition (pro residues); that stretch reads PQGPPGVPGPPGPPGM. The nonhelical region 4 (NC4) stretch occupies residues 934-967; it reads AELGSLPIEKHLLKSICGDCAQGQTAHPAFLLEK. Residues 968 to 982 form a triple-helical region 3 (COL3) region; that stretch reads GEKGDQGIPGVPGFD. Residues 983–1005 are nonhelical region 3 (NC3); it reads NCARCFIERERPRAEEARGDNSE. Disordered regions lie at residues 995 to 1405 and 1445 to 1523; these read RAEE…LPGS and AAAP…GYGK. Residues 1000 to 1002 carry the Cell attachment site motif; it reads RGD. Residues 1006–1063 form the Collagen-like 5 domain; sequence GEPGCSGSPGLPGPPGMPGQRGEEGPPGMRGSPGPPGPIGLQGERGLTGLTGDKGEPG. The tract at residues 1006–1409 is triple-helical region 2 (COL2) with 2 imperfections; the sequence is GEPGCSGSPG…PGLPGSMGDM (404 aa). Residues 1098 to 1107 are compositionally biased toward low complexity; the sequence is SGPPGSEGLP. 2 stretches are compositionally biased toward pro residues: residues 1139-1148 and 1178-1187; these read FPGPPGPPGF and SPGPPGPPGI. Over residues 1196 to 1205 the composition is skewed to basic and acidic residues; that stretch reads LDGKDGKPGL. Positions 1206–1208 match the Cell attachment site motif; sequence RGD. In terms of domain architecture, Collagen-like 6 spans 1210-1263; sequence GPAGPPGLMGPPGFKGKTGHPGLPGPKGDCGKPGPPGSSGRPGAEGEPGAMGPQ. Residues 1247–1263 show a composition bias toward low complexity; that stretch reads SSGRPGAEGEPGAMGPQ. Pro residues predominate over residues 1265 to 1281; sequence RPGPPGHLGPPGQPGPP. Collagen-like domains are found at residues 1350–1407, 1448–1500, and 1504–1552; these read GQKG…GSMG, PGRP…GDIG, and AGEN…GKAG. Residues 1362–1371 show a composition bias toward gly residues; sequence GMPGGPGKSG. The segment covering 1396 to 1405 has biased composition (low complexity); it reads NPGLPGLPGS. Positions 1410–1448 are nonhelical region 2 (NC2); the sequence is VNYDDIKRFIRQEIIKLFDERMAYYTSRMQFPMEVAAAP. The triple-helical region 1 (COL1) with 2 imperfections stretch occupies residues 1449 to 1554; sequence GRPGPPGKDG…MGQPGKAGHC (106 aa). The tract at residues 1555 to 1580 is nonhelical region 1 (NC1); it reads NPSDCFGAMPMEQQYPPMKSMKGPFG.

It belongs to the fibril-associated collagens with interrupted helices (FACIT) family. As to quaternary structure, homotrimer. Interacts with FBN1, fibronectin and integrins ITGA1/ITGB1 and ITGA2/ITGB1. Integrin ITGA1/ITGB1 binds to a unique site within COL16A1 located close to its C-terminal end between collagenous domains COL1-COL3. Prolines at the third position of the tripeptide repeating unit (G-X-Y) are hydroxylated in some or all of the chains. In terms of processing, glycosylated. As to expression, expressed in most tissues examined with highest levels of expression observed in heart. Strongly expressed in cortical and medullar regions of kidney and more weakly expressed in lung. Also detected in the ciliary muscle of the eye, on the serosa layer lining the muscularis externa of intestinal tissue, and in the perimysium membrane lining both the cardiac muscle bundle and the smooth muscle tissue of the small intestine. Strongly stained in particulate or granular structures. Not detected in brain or skeletal muscle.

It is found in the secreted. The protein localises to the extracellular space. Its subcellular location is the extracellular matrix. In terms of biological role, involved in mediating cell attachment and inducing integrin-mediated cellular reactions, such as cell spreading and alterations in cell morphology. The protein is Collagen alpha-1(XVI) chain of Mus musculus (Mouse).